Here is a 585-residue protein sequence, read N- to C-terminus: Glutamine--tRNA ligase (585 aa).

The 'HIGH' region signature appears at 51 to 61; the sequence is PEPNGYLHIGH. ATP is bound by residues 52-54 and 58-64; these read EPN and HIGHAKS. 2 residues coordinate L-glutamine: Asp-84 and Tyr-238. ATP-binding positions include Thr-257 and 292 to 293; that span reads RL. Residues 299–303 carry the 'KMSKS' region motif; sequence ITSKR.

It belongs to the class-I aminoacyl-tRNA synthetase family. Monomer.

It localises to the cytoplasm. The catalysed reaction is tRNA(Gln) + L-glutamine + ATP = L-glutaminyl-tRNA(Gln) + AMP + diphosphate. The sequence is that of Glutamine--tRNA ligase from Cupriavidus necator (strain ATCC 17699 / DSM 428 / KCTC 22496 / NCIMB 10442 / H16 / Stanier 337) (Ralstonia eutropha).